The primary structure comprises 372 residues: 4-hydroxy-3-methylbut-2-en-1-yl diphosphate synthase (flavodoxin) (372 aa).

Residues C270, C273, C305, and E312 each contribute to the [4Fe-4S] cluster site.

It belongs to the IspG family. The cofactor is [4Fe-4S] cluster.

It catalyses the reaction (2E)-4-hydroxy-3-methylbut-2-enyl diphosphate + oxidized [flavodoxin] + H2O + 2 H(+) = 2-C-methyl-D-erythritol 2,4-cyclic diphosphate + reduced [flavodoxin]. The protein operates within isoprenoid biosynthesis; isopentenyl diphosphate biosynthesis via DXP pathway; isopentenyl diphosphate from 1-deoxy-D-xylulose 5-phosphate: step 5/6. Its function is as follows. Converts 2C-methyl-D-erythritol 2,4-cyclodiphosphate (ME-2,4cPP) into 1-hydroxy-2-methyl-2-(E)-butenyl 4-diphosphate. This is 4-hydroxy-3-methylbut-2-en-1-yl diphosphate synthase (flavodoxin) from Alteromonas mediterranea (strain DSM 17117 / CIP 110805 / LMG 28347 / Deep ecotype).